A 377-amino-acid polypeptide reads, in one-letter code: Presenilin-associated rhomboid-like protein, mitochondrial (377 aa).

The N-terminal 50 residues, M1 to G50, are a transit peptide targeting the mitochondrion. Over F51–P99 the chain is Mitochondrial matrix. 2 positions are modified to phosphoserine: S63 and S68. A helical membrane pass occupies residues F100–Y119. Over E120–R165 the chain is Mitochondrial intermembrane. Residues T166 to S185 form a helical membrane-spanning segment. Residues L186–S205 are Mitochondrial matrix-facing. The chain crosses the membrane as a helical span at residues P206–W228. Residues S229–Q242 lie on the Mitochondrial intermembrane side of the membrane. The chain crosses the membrane as a helical span at residues F243–V260. Over C261–P270 the chain is Mitochondrial matrix. Residues S271–T287 form a helical membrane-spanning segment. S275 functions as the Nucleophile in the catalytic mechanism. Topologically, residues K288–R293 are mitochondrial intermembrane. The chain crosses the membrane as a helical span at residues L294 to M316. Over D317 to H330 the chain is Mitochondrial matrix. The helical transmembrane segment at A331 to W352 threads the bilayer. Residue H333 is part of the active site. Residues K353–K377 lie on the Mitochondrial intermembrane side of the membrane.

The protein belongs to the peptidase S54 family. In terms of assembly, interacts with PSEN1 and PSEN2. Binds OPA1. Post-translationally, P-beta is proteolytically processed (beta-cleavage) in a PARL-dependent manner.

It localises to the mitochondrion inner membrane. It is found in the nucleus. It catalyses the reaction Cleaves type-1 transmembrane domains using a catalytic dyad composed of serine and histidine that are contributed by different transmembrane domains.. Required for the control of apoptosis during postnatal growth. Essential for proteolytic processing of an antiapoptotic form of OPA1 which prevents the release of mitochondrial cytochrome c in response to intrinsic apoptotic signals. Required for the maturation of PINK1 into its 52kDa mature form after its cleavage by mitochondrial-processing peptidase (MPP). Promotes cleavage of serine/threonine-protein phosphatase PGAM5 in damaged mitochondria in response to loss of mitochondrial membrane potential. Mediates differential cleavage of PINK1 and PGAM5 depending on the health status of mitochondria, disassociating from PINK1 and associating with PGAM5 in response to mitochondrial membrane potential loss. Required for processing of CLPB into a form with higher protein disaggregase activity by removing an autoinhibitory N-terminal peptide. Promotes processing of DIABLO/SMAC in the mitochondrion which is required for DIABLO apoptotic activity. Also required for cleavage of STARD7 and TTC19. Promotes changes in mitochondria morphology regulated by phosphorylation of P-beta domain. The sequence is that of Presenilin-associated rhomboid-like protein, mitochondrial (Parl) from Mus musculus (Mouse).